The sequence spans 494 residues: GTPase Der (494 aa).

EngA-type G domains lie at Pro-3–Glu-166 and Ile-207–Thr-380. GTP-binding positions include Gly-9 to Ser-16, Asp-56 to Ile-60, Asn-118 to Asp-121, Gly-213 to Ser-220, Asp-260 to Val-264, and Asn-325 to Asp-328. A KH-like domain is found at Lys-381 to Glu-465.

It belongs to the TRAFAC class TrmE-Era-EngA-EngB-Septin-like GTPase superfamily. EngA (Der) GTPase family. As to quaternary structure, associates with the 50S ribosomal subunit.

Functionally, GTPase that plays an essential role in the late steps of ribosome biogenesis. This chain is GTPase Der, found in Yersinia enterocolitica serotype O:8 / biotype 1B (strain NCTC 13174 / 8081).